Reading from the N-terminus, the 946-residue chain is Probable inactive ATP-dependent zinc metalloprotease FTSHI 1, chloroplastic (946 aa).

The N-terminal 54 residues, Met-1–Cys-54, are a transit peptide targeting the chloroplast. The next 3 membrane-spanning stretches (helical) occupy residues Ala-289–Val-309, Val-320–Leu-340, and Val-369–Leu-389. ATP is bound at residue Gly-470–Thr-477.

This sequence in the N-terminal section; belongs to the AAA ATPase family. In the C-terminal section; belongs to the peptidase M41 family. As to quaternary structure, oligomer.

The protein localises to the plastid. It is found in the chloroplast inner membrane. In terms of biological role, functions in chloroplast biogenesis and chloroplast division. Required for plastid development during embryogenesis. Might be involved in chaperone functions or play a structural role in the thylakoid FtsH complex. The polypeptide is Probable inactive ATP-dependent zinc metalloprotease FTSHI 1, chloroplastic (Arabidopsis thaliana (Mouse-ear cress)).